The chain runs to 417 residues: Hydrogen cyanide synthase subunit HcnC (417 aa).

The first 18 residues, 1-18 (MIKHYDVVIAGGGVIGAS), serve as a signal peptide directing secretion. Residue 7–21 (VVIAGGGVIGASCAY) participates in FAD binding. Residue C19 is the site of N-palmitoyl cysteine attachment. C19 carries S-diacylglycerol cysteine lipidation. Residues 46–66 (SAGGLWAIGESVGLGCGVIFF) form a helical membrane-spanning segment.

The protein belongs to the FAD-dependent glycerol-3-phosphate dehydrogenase family. In terms of assembly, heterotrimer of HcnA, HcnB and HcnC.

It localises to the cell membrane. The enzyme catalyses glycine + 2 A = hydrogen cyanide + 2 AH2 + CO2. Functionally, a three-component membrane-bound flavoenzyme that catalyzes the formation of hydrogen cyanide, a secondary metabolite, by transfer of electrons to a cyanide-resistant branch of the aerobic respiratory chain. Contributes to suppression of black root rot of tobacco. The polypeptide is Hydrogen cyanide synthase subunit HcnC (Pseudomonas protegens (strain DSM 19095 / LMG 27888 / CFBP 6595 / CHA0)).